A 423-amino-acid chain; its full sequence is Histidine--tRNA ligase (423 aa).

This sequence belongs to the class-II aminoacyl-tRNA synthetase family. Homodimer.

Its subcellular location is the cytoplasm. It carries out the reaction tRNA(His) + L-histidine + ATP = L-histidyl-tRNA(His) + AMP + diphosphate + H(+). The sequence is that of Histidine--tRNA ligase from Corynebacterium diphtheriae (strain ATCC 700971 / NCTC 13129 / Biotype gravis).